A 518-amino-acid chain; its full sequence is ATP synthase F(1) complex catalytic subunit beta, mitochondrial (518 aa).

Residues glycine 199, valine 200, glycine 201, lysine 202, threonine 203, and valine 204 each coordinate ADP. Glycine 199 is an ATP binding site. Residues glycine 199, valine 200, glycine 201, lysine 202, and threonine 203 each coordinate phosphate. ATP is bound by residues glycine 201, lysine 202, threonine 203, and valine 204. Mg(2+) is bound at residue threonine 203. Residue glutamate 228 participates in Mg(2+) binding. Arginine 229 contacts ATP.

The protein belongs to the ATPase alpha/beta chains family. In terms of assembly, homotrimer. Component of the ATP synthase complex composed at least of ATP5F1A/subunit alpha, ATP5F1B/subunit beta, ATP5MC1/subunit c (homooctomer), MT-ATP6/subunit a, MT-ATP8/subunit 8, ATP5ME/subunit e, ATP5MF/subunit f, ATP5MG/subunit g, ATP5MK/subunit k, ATP5MJ/subunit j, ATP5F1C/subunit gamma, ATP5F1D/subunit delta, ATP5F1E/subunit epsilon, ATP5PF/subunit F6, ATP5PB/subunit b, ATP5PD/subunit d, ATP5PO/subunit OSCP. ATP synthase complex consists of a soluble F(1) head domain (subunits alpha(3) and beta(3)) - the catalytic core - and a membrane F(0) domain - the membrane proton channel (subunits c, a, 8, e, f, g, k and j). These two domains are linked by a central stalk (subunits gamma, delta, and epsilon) rotating inside the F1 region and a stationary peripheral stalk (subunits F6, b, d, and OSCP).

The protein resides in the mitochondrion inner membrane. It carries out the reaction ATP + H2O + 4 H(+)(in) = ADP + phosphate + 5 H(+)(out). Catalytic subunit beta, of the mitochondrial membrane ATP synthase complex (F(1)F(0) ATP synthase or Complex V) that produces ATP from ADP in the presence of a proton gradient across the membrane which is generated by electron transport complexes of the respiratory chain. ATP synthase complex consist of a soluble F(1) head domain - the catalytic core - and a membrane F(1) domain - the membrane proton channel. These two domains are linked by a central stalk rotating inside the F(1) region and a stationary peripheral stalk. During catalysis, ATP synthesis in the catalytic domain of F(1) is coupled via a rotary mechanism of the central stalk subunits to proton translocation. In vivo, can only synthesize ATP although its ATP hydrolase activity can be activated artificially in vitro. With the subunit alpha (ATP5F1A), forms the catalytic core in the F(1) domain. The chain is ATP synthase F(1) complex catalytic subunit beta, mitochondrial from Cyprinus carpio (Common carp).